Here is a 441-residue protein sequence, read N- to C-terminus: Dihydroorotase (441 aa).

Positions 77 and 79 each coordinate Zn(2+). Residues 79 to 81 and Asn111 each bind substrate; that span reads HFR. Asp167, His194, and His248 together coordinate Zn(2+). Residue Asn294 coordinates substrate. Asp321 lines the Zn(2+) pocket. Asp321 is a catalytic residue. Substrate contacts are provided by residues His325 and 339-340; that span reads FG.

Belongs to the metallo-dependent hydrolases superfamily. DHOase family. Class I DHOase subfamily. Requires Zn(2+) as cofactor.

The enzyme catalyses (S)-dihydroorotate + H2O = N-carbamoyl-L-aspartate + H(+). The protein operates within pyrimidine metabolism; UMP biosynthesis via de novo pathway; (S)-dihydroorotate from bicarbonate: step 3/3. In terms of biological role, catalyzes the reversible cyclization of carbamoyl aspartate to dihydroorotate. This Wolbachia sp. subsp. Drosophila simulans (strain wRi) protein is Dihydroorotase.